Consider the following 224-residue polypeptide: 7-cyano-7-deazaguanine synthase (224 aa).

10–20 lines the ATP pocket; the sequence is LSGGLDSATVA. The Zn(2+) site is built by C189, C199, C202, and C205.

The protein belongs to the QueC family. It depends on Zn(2+) as a cofactor.

The enzyme catalyses 7-carboxy-7-deazaguanine + NH4(+) + ATP = 7-cyano-7-deazaguanine + ADP + phosphate + H2O + H(+). Its pathway is purine metabolism; 7-cyano-7-deazaguanine biosynthesis. Its function is as follows. Catalyzes the ATP-dependent conversion of 7-carboxy-7-deazaguanine (CDG) to 7-cyano-7-deazaguanine (preQ(0)). The sequence is that of 7-cyano-7-deazaguanine synthase from Azotobacter vinelandii (strain DJ / ATCC BAA-1303).